The primary structure comprises 79 residues: MSEVADKVKKIVVEHLGVEESKVTPEASFIDDLGADSLDTVELVMAFEEAFGVEIPEDAAEKISTVKDAVEYIEKQKAA.

The Carrier domain maps to 2-77; it reads SEVADKVKKI…DAVEYIEKQK (76 aa). Serine 37 bears the O-(pantetheine 4'-phosphoryl)serine mark.

It belongs to the acyl carrier protein (ACP) family. In terms of processing, 4'-phosphopantetheine is transferred from CoA to a specific serine of apo-ACP by AcpS. This modification is essential for activity because fatty acids are bound in thioester linkage to the sulfhydryl of the prosthetic group.

The protein resides in the cytoplasm. Its pathway is lipid metabolism; fatty acid biosynthesis. Its function is as follows. Carrier of the growing fatty acid chain in fatty acid biosynthesis. In Granulibacter bethesdensis (strain ATCC BAA-1260 / CGDNIH1), this protein is Acyl carrier protein.